The chain runs to 356 residues: Histidinol-phosphate aminotransferase (356 aa).

The residue at position 214 (Lys-214) is an N6-(pyridoxal phosphate)lysine.

Belongs to the class-II pyridoxal-phosphate-dependent aminotransferase family. Histidinol-phosphate aminotransferase subfamily. As to quaternary structure, homodimer. Requires pyridoxal 5'-phosphate as cofactor.

It catalyses the reaction L-histidinol phosphate + 2-oxoglutarate = 3-(imidazol-4-yl)-2-oxopropyl phosphate + L-glutamate. The protein operates within amino-acid biosynthesis; L-histidine biosynthesis; L-histidine from 5-phospho-alpha-D-ribose 1-diphosphate: step 7/9. In Shigella flexneri serotype 5b (strain 8401), this protein is Histidinol-phosphate aminotransferase.